The following is a 396-amino-acid chain: Probable peptidoglycan glycosyltransferase FtsW (396 aa).

Residues 1 to 27 (MPFLDKVKQQYEDWTRITPSNLLYDRA) are Cytoplasmic-facing. Residues 28-48 (LLLLFFVLLLIGLLAVSSASI) traverse the membrane as a helical segment. Over 49-64 (PVGTRLFKDPFYFAKR) the chain is Periplasmic. The chain crosses the membrane as a helical span at residues 65–85 (DAIYVFLSCVTCYLCVQVPME). Residues 86–93 (KWEQWHVR) lie on the Cytoplasmic side of the membrane. Residues 94–114 (LFAFAIFLLILVLIPGIGLSV) form a helical membrane-spanning segment. The Periplasmic portion of the chain corresponds to 115 to 122 (NGARRWIP). Residues 123–143 (MVLFNFQPAEFAKLALTCFLA) traverse the membrane as a helical segment. Topologically, residues 144-157 (SYFTRKYDEVRSRK) are cytoplasmic. Residues 158–178 (LSAFKPFALMGLMGLFLLSQP) traverse the membrane as a helical segment. Over 179–183 (DLGST) the chain is Periplasmic. Transmembrane regions (helical) follow at residues 184–204 (VVLF…FWQF) and 205–225 (VGLM…SAYR). The Periplasmic portion of the chain corresponds to 226-285 (LKRFTGFLDPFKDPYGTGFQLSNSLMAFGRGEWVGEGLGNSIQKLEYLPEAHTDFVMAVV). Residues 286–306 (GEEFGFLGILVIVILLGLLIF) traverse the membrane as a helical segment. Residues 307-323 (RAMKIGRESLLLEQRFK) are Cytoplasmic-facing. Residues 324–344 (GFFAFGISFWIFFQGFVNLGM) form a helical membrane-spanning segment. Residues 345-355 (SLGLLPTKGLT) lie on the Periplasmic side of the membrane. The helical transmembrane segment at 356–376 (FPLISYGGSSLIIMSMTIGLL) threads the bilayer. Residues 377 to 396 (LRIDHENRLMRIGQARLRDD) lie on the Cytoplasmic side of the membrane.

This sequence belongs to the SEDS family. FtsW subfamily.

Its subcellular location is the cell inner membrane. The enzyme catalyses [GlcNAc-(1-&gt;4)-Mur2Ac(oyl-L-Ala-gamma-D-Glu-L-Lys-D-Ala-D-Ala)](n)-di-trans,octa-cis-undecaprenyl diphosphate + beta-D-GlcNAc-(1-&gt;4)-Mur2Ac(oyl-L-Ala-gamma-D-Glu-L-Lys-D-Ala-D-Ala)-di-trans,octa-cis-undecaprenyl diphosphate = [GlcNAc-(1-&gt;4)-Mur2Ac(oyl-L-Ala-gamma-D-Glu-L-Lys-D-Ala-D-Ala)](n+1)-di-trans,octa-cis-undecaprenyl diphosphate + di-trans,octa-cis-undecaprenyl diphosphate + H(+). Its pathway is cell wall biogenesis; peptidoglycan biosynthesis. In terms of biological role, peptidoglycan polymerase that is essential for cell division. This chain is Probable peptidoglycan glycosyltransferase FtsW, found in Pasteurella multocida (strain Pm70).